Here is a 235-residue protein sequence, read N- to C-terminus: MPKHGKKYRNATEGLDLTVKYSVEDAVAKSLAAAPAKFDETVDVAICLGVDPKYSDQMVRGAVTMPNGLGKTVRVAVFCKGEKEAEAKAAGADVAGAEELVAKIKEGWLDFDKAIATPDVMALVGQIGRVLGPRGLMPNAKTGTVTFDITTAIKEMKAGRVEFKVDKAGVLHAPLGKVSFGSEKILGNLKALIDTVNRLKPSSAKGTYMQAMAISTTMGPGVKVDPTLIKKFIEG.

This sequence belongs to the universal ribosomal protein uL1 family. As to quaternary structure, part of the 50S ribosomal subunit.

In terms of biological role, binds directly to 23S rRNA. The L1 stalk is quite mobile in the ribosome, and is involved in E site tRNA release. Its function is as follows. Protein L1 is also a translational repressor protein, it controls the translation of the L11 operon by binding to its mRNA. This chain is Large ribosomal subunit protein uL1, found in Nitratidesulfovibrio vulgaris (strain ATCC 29579 / DSM 644 / CCUG 34227 / NCIMB 8303 / VKM B-1760 / Hildenborough) (Desulfovibrio vulgaris).